A 901-amino-acid polypeptide reads, in one-letter code: HTH-type transcriptional regulator MalT (901 aa).

An ATP-binding site is contributed by 39–46 (SPAGYGKT). The region spanning 829 to 894 (ELIRTSPLTQ…AAVQHAQKLL (66 aa)) is the HTH luxR-type domain. Residues 853 to 872 (NEQIAGELEVAATTIKTHIR) constitute a DNA-binding region (H-T-H motif).

This sequence belongs to the MalT family. Monomer in solution. Oligomerizes to an active state in the presence of the positive effectors ATP and maltotriose.

With respect to regulation, activated by ATP and maltotriose, which are both required for DNA binding. Its function is as follows. Positively regulates the transcription of the maltose regulon whose gene products are responsible for uptake and catabolism of malto-oligosaccharides. Specifically binds to the promoter region of its target genes, recognizing a short DNA motif called the MalT box. The polypeptide is HTH-type transcriptional regulator MalT (Shigella boydii serotype 4 (strain Sb227)).